Reading from the N-terminus, the 180-residue chain is Beta-lactoglobulin (180 aa).

Residues 1-18 (MKCLLLALGLALACAAQA) form the signal peptide. 3 cysteine pairs are disulfide-bonded: Cys-84–Cys-178, Cys-124–Cys-137, and Cys-124–Cys-139.

This sequence belongs to the calycin superfamily. Lipocalin family. Under physiological conditions beta-lactoglobulin exists as an equilibrium mixture of monomeric and dimeric forms. Interaction with LMBR1L is controversial. In terms of processing, alternate disulfide bonds occur in equal amounts. In terms of tissue distribution, synthesized in mammary gland and secreted in milk.

It localises to the secreted. In terms of biological role, primary component of whey, it binds retinol and is probably involved in the transport of that molecule. This chain is Beta-lactoglobulin (LGB), found in Bubalus bubalis (Domestic water buffalo).